Reading from the N-terminus, the 432-residue chain is UDP-N-acetylmuramate--L-alanine ligase (432 aa).

108-114 (GAHGKTS) is an ATP binding site.

Belongs to the MurCDEF family.

The protein resides in the cytoplasm. It carries out the reaction UDP-N-acetyl-alpha-D-muramate + L-alanine + ATP = UDP-N-acetyl-alpha-D-muramoyl-L-alanine + ADP + phosphate + H(+). The protein operates within cell wall biogenesis; peptidoglycan biosynthesis. Cell wall formation. The polypeptide is UDP-N-acetylmuramate--L-alanine ligase (Bacillus velezensis (strain DSM 23117 / BGSC 10A6 / LMG 26770 / FZB42) (Bacillus amyloliquefaciens subsp. plantarum)).